A 356-amino-acid chain; its full sequence is Zinc finger protein 830 (356 aa).

The stretch at 11-33 forms a coiled coil; that stretch reads AQEELRKLMKAKQRESSSKKRIE. The segment at 47–69 adopts a C2H2-type zinc-finger fold; that stretch reads CVVCNSLIKSELLWPAHILGKQH. The segment at 71 to 195 is disordered; that stretch reads EKVAELKGTK…PTSSADNLPA (125 aa). Polar residues predominate over residues 80-90; sequence KATTSSPSNTI. Basic and acidic residues-rich tracts occupy residues 99 to 118 and 125 to 135; these read KGSEPEKQESKRTKGSEDHP and LPEEFFEKEKT. Over residues 150–165 the composition is skewed to acidic residues; sequence DYEDVDDDDAEEGEEY. The stretch at 278–322 forms a coiled coil; that stretch reads AEEDEEGRLDRQIDEIDEQIQCYRRVEHLRDRKDTLQDAKMEVLK.

It localises to the nucleus. It is found in the chromosome. Its subcellular location is the nucleus speckle. Functionally, may act as an important regulator of the cell cycle that participates in the maintenance of genome integrity. The sequence is that of Zinc finger protein 830 from Xenopus laevis (African clawed frog).